An 86-amino-acid polypeptide reads, in one-letter code: Maxadilan (86 aa).

A signal peptide spans 1-23 (MKQILLISLVVVLAVFAFNVAEG). 2 disulfides stabilise this stretch: cysteine 24–cysteine 28 and cysteine 37–cysteine 74.

As to quaternary structure, interacts with human ADCYAP1R1. Salivary gland (at protein level).

The protein localises to the secreted. Potent vasodilator. Activates mammalian ADCYAP1R1, a PAC1 receptor, and induces cAMP accumulation in host cells. Causes the development of erythema following superficial injection into the rabbit or human skin. Influences adaptive immune responses mediated by host dendritic cells. Reduces surface expression of CD80 on host dendritic cells stimulated with lipopolysaccharides (LPS) and induces concomitant increase in CD86 expression on a subpopulation of these cells. Redirects cytokine secretion by LPS-activated host dendritic cells toward type 2 responses: decreases secretion of TNF-alpha/TNF, IL-12p40/IL12B and IFN-gamma/IFNG, and increases secretion of IL6 and IL10. Reduces ability of host bone marrow-derived dendritic cells to stimulate proliferation of CD4(+) T-cells. Reprograms the effect of LPS-activated host dendritic cells on cytokine secretion profiles in host T-cells: decreases secretion of TNF-alpha/TNF and IFN-gamma/IFNG, increases secretion of IL6 and IL13, and increases secretion of pro-inflammatory cytokine IL-1beta/IL1B in mixed lymphocyte reaction (MLR) cultures. Reduces LPS-induced up-regulation of CCR7 in activated host dendritic cells. Inhibits IFN-gamma/IFNG and IL-12p40/IL12B production by human peripheral blood mononuclear cells. Increases IL6 and decreases TNF-alpha/TNF production by LPS-stimulated human monocytes. Functionally, (Microbial infection) Probably plays a critical role in the enhancement of Leishmania infectivity in the host attributed to sand fly saliva. The polypeptide is Maxadilan (Lutzomyia longipalpis (Sand fly)).